The primary structure comprises 296 residues: NADH-cytochrome b5 reductase 1 (296 aa).

Residues 11–31 form a helical membrane-spanning segment; that stretch reads LSAVLVKFAPFAVAVIAILAA. Residues 47-152 enclose the FAD-binding FR-type domain; it reads SEFQNFVLKE…RGPKGAMVYT (106 aa). Residues 132 to 147 and 158 to 195 each bind FAD; these read TTLK…GPKG and HIGM…KIDL.

It belongs to the flavoprotein pyridine nucleotide cytochrome reductase family. Monomer. Component of the 2-(3-amino-3-carboxypropyl)histidine synthase complex composed of dph1, dph2, dph3 and a NADH-dependent reductase, predominantly cbr1. It depends on FAD as a cofactor.

Its subcellular location is the mitochondrion outer membrane. It catalyses the reaction 2 Fe(III)-[cytochrome b5] + NADH = 2 Fe(II)-[cytochrome b5] + NAD(+) + H(+). It carries out the reaction 2 Fe(3+)-[Dph3] + NADH = 2 Fe(2+)-[Dph3] + NAD(+) + H(+). It functions in the pathway protein modification; peptidyl-diphthamide biosynthesis. Its function is as follows. NADH-dependent reductase for dph3 and cytochrome b5. Required for the first step of diphthamide biosynthesis, a post-translational modification of histidine which occurs in elongation factor 2. Dph1 and dph2 transfer a 3-amino-3-carboxypropyl (ACP) group from S-adenosyl-L-methionine (SAM) to a histidine residue, the reaction is assisted by a reduction system comprising dph3 and a NADH-dependent reductase, predominantly cbr1. By reducing dph3, also involved in the formation of the tRNA wobble base modification mcm5s 2U (5-methoxycarbonylmethyl-2-thiouridine), mediated by the elongator complex. The cytochrome b5/NADH cytochrome b5 reductase electron transfer system supports the catalytic activity of several sterol biosynthetic enzymes. The protein is NADH-cytochrome b5 reductase 1 (cbr1) of Aspergillus terreus (strain NIH 2624 / FGSC A1156).